Here is a 515-residue protein sequence, read N- to C-terminus: Signal transduction histidine-protein kinase/phosphatase MprB (515 aa).

Topologically, residues 1-24 are cytoplasmic; it reads MTLPPPPSRLKPPRNTSSLSLRWR. A helical membrane pass occupies residues 25 to 45; that stretch reads VMLLAMSMVAMVVVLMSVAVY. Topologically, residues 46–165 are extracellular; it reads AVVSRALYDD…TGQVLGRLGT (120 aa). The helical transmembrane segment at 166–186 threads the bilayer; the sequence is VLLIVGGVGVAVAAIAGGMVA. The region spanning 187–239 is the HAMP domain; it reads RAGLRPVGRLTQAAERVARTDDLRPIPVFGSDELARLTEAFNMMLRALTESRE. The Cytoplasmic portion of the chain corresponds to 187–515; that stretch reads RAGLRPVGRL…GKSRSASKEL (329 aa). One can recognise a Histidine kinase domain in the interval 247–467; the sequence is DAGHELRTPL…SFYVMLPGRP (221 aa). Histidine 250 carries the phosphohistidine; by autocatalysis modification. The disordered stretch occupies residues 468-515; sequence LTPGGNGTAPVPAAQFDPDMRSAGSRADRRVIKNTETNGKSRSASKEL.

Mg(2+) is required as a cofactor. Requires Mn(2+) as cofactor. Autophosphorylated.

Its subcellular location is the cell membrane. The enzyme catalyses ATP + protein L-histidine = ADP + protein N-phospho-L-histidine.. In terms of biological role, member of the two-component regulatory system MprB/MprA which contributes to maintaining a balance among several systems involved in stress resistance and is required for establishment and maintenance of persistent infection in the host. In response to environmental signals MprB acts both as a membrane-associated protein kinase that undergoes autophosphorylation and subsequently transfers the phosphate to MprA, and a protein phosphatase that dephosphorylates phospho-MprA. In Mycobacterium sp. (strain KMS), this protein is Signal transduction histidine-protein kinase/phosphatase MprB (mprB).